A 402-amino-acid polypeptide reads, in one-letter code: Cysteine desulfurase NifS (402 aa).

Pyridoxal 5'-phosphate contacts are provided by residues 72 to 73, Asn151, Gln179, and 199 to 201; these read GT and CGH. The residue at position 202 (Lys202) is an N6-(pyridoxal phosphate)lysine. Thr237 is a binding site for pyridoxal 5'-phosphate. The active-site Cysteine persulfide intermediate is Cys325. Position 325 (Cys325) interacts with [2Fe-2S] cluster.

Belongs to the class-V pyridoxal-phosphate-dependent aminotransferase family. NifS/IscS subfamily. As to quaternary structure, homodimer. The cofactor is pyridoxal 5'-phosphate.

The catalysed reaction is (sulfur carrier)-H + L-cysteine = (sulfur carrier)-SH + L-alanine. Its activity is regulated as follows. Inhibited by equimolar concentrations of p-chloromercuribenzoic acid, iodoacetamide or N-ethylmaleimide. Catalyzes the removal of elemental sulfur atoms from cysteine to produce alanine. Seems to participate in the biosynthesis of the nitrogenase metalloclusters by providing the inorganic sulfur required for the Fe-S core formation. The sequence is that of Cysteine desulfurase NifS from Azotobacter vinelandii.